The primary structure comprises 117 residues: Large ribosomal subunit protein uL22 (117 aa).

It belongs to the universal ribosomal protein uL22 family. In terms of assembly, part of the 50S ribosomal subunit.

This protein binds specifically to 23S rRNA; its binding is stimulated by other ribosomal proteins, e.g. L4, L17, and L20. It is important during the early stages of 50S assembly. It makes multiple contacts with different domains of the 23S rRNA in the assembled 50S subunit and ribosome. In terms of biological role, the globular domain of the protein is located near the polypeptide exit tunnel on the outside of the subunit, while an extended beta-hairpin is found that lines the wall of the exit tunnel in the center of the 70S ribosome. The sequence is that of Large ribosomal subunit protein uL22 from Staphylococcus epidermidis (strain ATCC 35984 / DSM 28319 / BCRC 17069 / CCUG 31568 / BM 3577 / RP62A).